A 427-amino-acid polypeptide reads, in one-letter code: Isocitrate lyase (427 aa).

89 to 91 (SGW) is a substrate binding site. Asp-150 serves as a coordination point for Mg(2+). Cys-188 functions as the Proton acceptor in the catalytic mechanism. Residues 189-190 (GH), Arg-225, 310-314 (NCSPS), and Thr-344 contribute to the substrate site.

This sequence belongs to the isocitrate lyase/PEP mutase superfamily. Isocitrate lyase family. As to quaternary structure, homotetramer. Requires Mg(2+) as cofactor.

The enzyme catalyses D-threo-isocitrate = glyoxylate + succinate. It functions in the pathway carbohydrate metabolism; glyoxylate cycle; (S)-malate from isocitrate: step 1/2. Functionally, involved in the metabolic adaptation in response to environmental changes. Catalyzes the reversible formation of succinate and glyoxylate from isocitrate, a key step of the glyoxylate cycle, which operates as an anaplerotic route for replenishing the tricarboxylic acid cycle during growth on fatty acid substrates. This Halalkalibacterium halodurans (strain ATCC BAA-125 / DSM 18197 / FERM 7344 / JCM 9153 / C-125) (Bacillus halodurans) protein is Isocitrate lyase (aceA).